We begin with the raw amino-acid sequence, 127 residues long: Aspartate 1-decarboxylase (127 aa).

Ser25 functions as the Schiff-base intermediate with substrate; via pyruvic acid in the catalytic mechanism. Ser25 bears the Pyruvic acid (Ser) mark. Position 57 (Thr57) interacts with substrate. The active-site Proton donor is Tyr58. A substrate-binding site is contributed by 73-75 (GAA).

The protein belongs to the PanD family. As to quaternary structure, heterooctamer of four alpha and four beta subunits. It depends on pyruvate as a cofactor. Post-translationally, is synthesized initially as an inactive proenzyme, which is activated by self-cleavage at a specific serine bond to produce a beta-subunit with a hydroxyl group at its C-terminus and an alpha-subunit with a pyruvoyl group at its N-terminus.

It is found in the cytoplasm. The enzyme catalyses L-aspartate + H(+) = beta-alanine + CO2. Its pathway is cofactor biosynthesis; (R)-pantothenate biosynthesis; beta-alanine from L-aspartate: step 1/1. Its function is as follows. Catalyzes the pyruvoyl-dependent decarboxylation of aspartate to produce beta-alanine. The sequence is that of Aspartate 1-decarboxylase from Listeria monocytogenes serovar 1/2a (strain ATCC BAA-679 / EGD-e).